The primary structure comprises 134 residues: MFGKVFVSYIRTRIGFKPLSTIYTPVSSSSLSFDKEACFPFKKWHELNMSQKQEFIQRFVKNYRHQYPSSKTNVSLKGLSIGMDEHNDSPSVFGIFYNDIWKSFKNEQLGTNNDNMKSGSRFSHPSFKQLLIQK.

This is an uncharacterized protein from Saccharomyces cerevisiae (strain ATCC 204508 / S288c) (Baker's yeast).